We begin with the raw amino-acid sequence, 319 residues long: Taste receptor type 2 member 30 (319 aa).

Residue methionine 1 is a topological domain, extracellular. A helical membrane pass occupies residues 2–22 (ITFLPIIFSILIVVIFVVGNF). Over 23–46 (ANGFIALVNSIEWVKRQKISFVDQ) the chain is Cytoplasmic. Residues 47–67 (ILTALAVSRVGLLWVLLLHWY) traverse the membrane as a helical segment. Residues 68 to 86 (ATQLNPAFYSVEVRITVYN) are Extracellular-facing. Residues 87 to 107 (VWAVTNHFSSWLATSLSMFYL) traverse the membrane as a helical segment. The Cytoplasmic segment spans residues 108-126 (LKIANFSNLIFLRIKRRVK). A helical membrane pass occupies residues 127–147 (SVVLVILLGPLLFLVCHLFVI). Topologically, residues 148–178 (NMDETIWTKEYEGNMTWKIKLKSAMYHSNMT) are extracellular. Asparagine 161 and asparagine 176 each carry an N-linked (GlcNAc...) asparagine glycan. The helical transmembrane segment at 179–199 (LTILANFVPLTLTLISFLLLI) threads the bilayer. The Cytoplasmic portion of the chain corresponds to 200-229 (CSLCKHLKKMQLHGKGSQDPSTKVHIKALQ). The helical transmembrane segment at 230–250 (TVTSFLLLCAIYFLSMIISVC) threads the bilayer. Over 251–259 (NLGRLQKQP) the chain is Extracellular. A helical transmembrane segment spans residues 260–280 (VFMFCQAIIFSYPSTHPFILI). Over 281-319 (LGNKKLKQIFLSVLWHVRYWVKDRSLRLHRFTRAALCKG) the chain is Cytoplasmic.

It belongs to the G-protein coupled receptor T2R family.

It localises to the membrane. Its function is as follows. Receptor that may play a role in the perception of bitterness and is gustducin-linked. May play a role in sensing the chemical composition of the gastrointestinal content. The activity of this receptor may stimulate alpha gustducin, mediate PLC-beta-2 activation and lead to the gating of TRPM5. This is Taste receptor type 2 member 30 (TAS2R30) from Pan paniscus (Pygmy chimpanzee).